The primary structure comprises 456 residues: Probable glycine dehydrogenase (decarboxylating) subunit 1 (456 aa).

Belongs to the GcvP family. N-terminal subunit subfamily. In terms of assembly, the glycine cleavage system is composed of four proteins: P, T, L and H. In this organism, the P 'protein' is a heterodimer of two subunits.

The catalysed reaction is N(6)-[(R)-lipoyl]-L-lysyl-[glycine-cleavage complex H protein] + glycine + H(+) = N(6)-[(R)-S(8)-aminomethyldihydrolipoyl]-L-lysyl-[glycine-cleavage complex H protein] + CO2. Its function is as follows. The glycine cleavage system catalyzes the degradation of glycine. The P protein binds the alpha-amino group of glycine through its pyridoxal phosphate cofactor; CO(2) is released and the remaining methylamine moiety is then transferred to the lipoamide cofactor of the H protein. This Legionella pneumophila (strain Lens) protein is Probable glycine dehydrogenase (decarboxylating) subunit 1.